Here is a 598-residue protein sequence, read N- to C-terminus: uncharacterized protein (598 aa).

The Mn(2+) site is built by aspartate 397, aspartate 408, glutamate 506, and glutamate 520.

This sequence belongs to the peptidase M24B family. Mn(2+) serves as cofactor.

This is an uncharacterized protein from Schizosaccharomyces pombe (strain 972 / ATCC 24843) (Fission yeast).